Reading from the N-terminus, the 463-residue chain is RuvB-like 2 (463 aa).

N-acetylalanine is present on A2. A Glycyl lysine isopeptide (Lys-Gly) (interchain with G-Cter in SUMO2) cross-link involves residue K9. Residue 77–84 (GQPGTGKT) coordinates ATP. S437 bears the Phosphoserine mark. Residues K444 and K456 each participate in a glycyl lysine isopeptide (Lys-Gly) (interchain with G-Cter in SUMO2) cross-link.

This sequence belongs to the RuvB family. Forms homohexameric rings. Can form a dodecamer with RUVBL1 made of two stacked hexameric rings; however, even though RUVBL1 and RUVBL2 are present in equimolar ratio, the oligomeric status of each hexamer is not known. Oligomerization may regulate binding to nucleic acids and conversely, binding to nucleic acids may affect the dodecameric assembly. Interaction of the complex with DHX34 results in conformational changes of the N-terminus of the RUVBL2 subunits, resulting in loss of nucleotide binding ability and ATP hydrolysis of the complex. Interacts with the transcriptional activation domain of MYC. Interacts with ATF2. Component of the RNA polymerase II holoenzyme complex. May also act to bridge the LEF1/TCF1-CTNNB1 complex and TBP. Component of the NuA4 histone acetyltransferase complex which contains the catalytic subunit KAT5/TIP60 and the subunits EP400, TRRAP/PAF400, BRD8/SMAP, EPC1, DMAP1/DNMAP1, RUVBL1/TIP49, RUVBL2, ING3, actin, ACTL6A/BAF53A, MORF4L1/MRG15, MORF4L2/MRGX, MRGBP, YEATS4/GAS41, VPS72/YL1 and MEAF6. The NuA4 complex interacts with MYC and the adenovirus E1A protein. RUVBL2 interacts with EP400. Component of a NuA4-related complex which contains EP400, TRRAP/PAF400, SRCAP, BRD8/SMAP, EPC1, DMAP1/DNMAP1, RUVBL1/TIP49, RUVBL2, actin, ACTL6A/BAF53A, VPS72 and YEATS4/GAS41. Interacts with NPAT. Component of the chromatin-remodeling INO80 complex; specifically part of a complex module associated with the helicase ATP-binding and the helicase C-terminal domain of INO80. Component of some MLL1/MLL complex, at least composed of the core components KMT2A/MLL1, ASH2L, HCFC1/HCF1, WDR5 and RBBP5, as well as the facultative components BACC1, CHD8, E2F6, HSP70, INO80C, KANSL1, LAS1L, MAX, MCRS1, MGA, MYST1/MOF, PELP1, PHF20, PRP31, RING2, RUVB1/TIP49A, RUVB2/TIP49B, SENP3, TAF1, TAF4, TAF6, TAF7, TAF9 and TEX10. Interacts with IGHMBP2. Interacts with TELO2. Interacts with HINT1. Component of a SWR1-like complex. Component of the R2TP complex composed at least of RUVBL1, RUVBL2, RPAP3 and PIHD1. Component of the PAQosome complex which is responsible for the biogenesis of several protein complexes and which consists of R2TP complex members RUVBL1, RUVBL2, RPAP3 and PIH1D1, URI complex members PFDN2, PFDN6, PDRG1, UXT and URI1 as well as ASDURF, POLR2E and DNAAF10/WDR92. Interacts with ITFG1. Interacts with ZMYND10. Interacts with WAC; WAC positively regulates MTOR activity by promoting the assembly of the TTT complex composed of TELO2, TTI1 and TTI2 and the RUVBL complex composed of RUVBL1 and RUVBL2 into the TTT-RUVBL complex which leads to the dimerization of the mTORC1 complex and its subsequent activation. Forms a complex with APPL1 and APPL2. Interacts with ZNHIT2 (via HIT-type zinc finger) in the presence of ATP or ADP; shows a stronger interaction in the presence of ADP. The RUVBL1/RUVBL2 complex interacts with ZNHIT1 (via HIT-type zinc finger), ZNHIT3 (via HIT-type zinc finger), ZNHIT6 (via HIT-type zinc finger) and DDX59/ZNHIT5 (via HIT-type zinc finger) in the presence of ADP. Interacts with NOPCHAP1; the interaction is direct and disrupted upon ATP binding. Interacts with SMG1.

It localises to the nucleus matrix. Its subcellular location is the nucleus. The protein resides in the nucleoplasm. The protein localises to the cytoplasm. It is found in the membrane. It localises to the dynein axonemal particle. It catalyses the reaction ATP + H2O = ADP + phosphate + H(+). Its function is as follows. Possesses single-stranded DNA-stimulated ATPase and ATP-dependent DNA helicase (5' to 3') activity; hexamerization is thought to be critical for ATP hydrolysis and adjacent subunits in the ring-like structure contribute to the ATPase activity. Component of the NuA4 histone acetyltransferase complex which is involved in transcriptional activation of select genes principally by acetylation of nucleosomal histones H4 and H2A. This modification may both alter nucleosome-DNA interactions and promote interaction of the modified histones with other proteins which positively regulate transcription. This complex may be required for the activation of transcriptional programs associated with oncogene and proto-oncogene mediated growth induction, tumor suppressor mediated growth arrest and replicative senescence, apoptosis, and DNA repair. The NuA4 complex ATPase and helicase activities seem to be, at least in part, contributed by the association of RUVBL1 and RUVBL2 with EP400. NuA4 may also play a direct role in DNA repair when recruited to sites of DNA damage. Component of a SWR1-like complex that specifically mediates the removal of histone H2A.Z/H2AZ1 from the nucleosome. Proposed core component of the chromatin remodeling INO80 complex which exhibits DNA- and nucleosome-activated ATPase activity and catalyzes ATP-dependent nucleosome sliding. Plays an essential role in oncogenic transformation by MYC and also modulates transcriptional activation by the LEF1/TCF1-CTNNB1 complex. May also inhibit the transcriptional activity of ATF2. Involved in the endoplasmic reticulum (ER)-associated degradation (ERAD) pathway where it negatively regulates expression of ER stress response genes. May play a role in regulating the composition of the U5 snRNP complex. This chain is RuvB-like 2 (RUVBL2), found in Bos taurus (Bovine).